Consider the following 296-residue polypeptide: dTDP-rhamnosyl transferase RfbF (296 aa).

This sequence belongs to the glycosyltransferase 2 family.

The protein operates within bacterial outer membrane biogenesis; lipopolysaccharide biosynthesis. The chain is dTDP-rhamnosyl transferase RfbF (rfbF) from Shigella flexneri.